An 80-amino-acid polypeptide reads, in one-letter code: N-V protease (80 aa).

Belongs to the peptidase S8 family. Monomer. Body cavity.

The protein localises to the secreted. With respect to regulation, inhibited by the serine protease inhibitors DFP, PMSF and TLCK. Not inhibited by the serine protease inhibitors aprotinin, elastinal, SBTI and benzamidine, the cysteine protease inhibitors iodoacetate and E64, or the metalloprotease inhibitors EDTA and EGTA. Functionally, serine protease. Hydrolyzes the alpha chains of fibrin and fibrinogen completely, has lower activity on the beta and gamma chains of fibrin and fibrinogen. The chain is N-V protease from Alitta virens (Sandworm).